We begin with the raw amino-acid sequence, 116 residues long: Large ribosomal subunit protein bL20c (116 aa).

It belongs to the bacterial ribosomal protein bL20 family.

It is found in the plastid. The protein resides in the chloroplast. Binds directly to 23S ribosomal RNA and is necessary for the in vitro assembly process of the 50S ribosomal subunit. It is not involved in the protein synthesizing functions of that subunit. This is Large ribosomal subunit protein bL20c from Ipomoea purpurea (Common morning glory).